Here is a 3413-residue protein sequence, read N- to C-terminus: Protein pecanex (3413 aa).

2 consecutive transmembrane segments (helical) span residues 33–53 and 57–77; these read VVHLYLWLYLLCSPFVAYLYF and WLTWCLYCVITSLTILMVKLA. Asn164 is a glycosylation site (N-linked (GlcNAc...) asparagine). Low complexity predominate over residues 182–195; it reads GSQQDQQSLAGSAS. Disordered regions lie at residues 182–213 and 235–314; these read GSQQDQQSLAGSASVSKSIRSTGPGGNSSTSA and GSSA…ENKL. The span at 196 to 213 shows a compositional bias: polar residues; it reads VSKSIRSTGPGGNSSTSA. Residue Asn208 is glycosylated (N-linked (GlcNAc...) asparagine). Residues 302–312 show a composition bias toward low complexity; it reads AAAAANSNAEN. Asn317 carries N-linked (GlcNAc...) asparagine glycosylation. 4 disordered regions span residues 327 to 363, 379 to 403, 540 to 609, and 625 to 651; these read PSFLHSQPTNKARGQTNPRQHFITSAPSTGIGGGDAP, LVNPGRSSRLQRHRSSETHDERLKH, PGTG…GTGG, and PSVSNLSPHPNSVEAISGQQQMRNPLP. Over residues 330–354 the composition is skewed to polar residues; the sequence is LHSQPTNKARGQTNPRQHFITSAPS. Residues 392-402 show a composition bias toward basic and acidic residues; sequence RSSETHDERLK. Over residues 541-559 the composition is skewed to gly residues; the sequence is GTGGSVTGGGGAAGGGGSA. N-linked (GlcNAc...) asparagine glycosylation is found at Asn569 and Asn581. Polar residues predominate over residues 569–582; that stretch reads NATSYKHGSSQSNK. Residues 599–609 are compositionally biased toward gly residues; that stretch reads GTSGGAGGTGG. Positions 625–634 are enriched in polar residues; that stretch reads PSVSNLSPHP. N-linked (GlcNAc...) asparagine glycosylation occurs at Asn685. Basic and acidic residues predominate over residues 720–730; it reads EKTAHEEHGDD. Disordered regions lie at residues 720–745, 816–873, 886–921, and 1002–1021; these read EKTAHEEHGDDCLGIGQGNADDDDEV, HHHS…NRQP, RQELSHQSGAVIPAPNPPVPIRSEADSGCPSSDCEQ, and KQTKQASRNSSSSNSTHSIS. A compositionally biased stretch (basic residues) spans 816–826; the sequence is HHHSHLHHHKA. The segment covering 828–846 has biased composition (low complexity); it reads SVEGAGPSGGSVAVGVSAG. A compositionally biased stretch (acidic residues) spans 847 to 856; that stretch reads NDDEDEETED. The N-linked (GlcNAc...) asparagine glycan is linked to Asn857. The segment covering 1008–1021 has biased composition (low complexity); sequence SRNSSSSNSTHSIS. Asn1010, Asn1015, Asn1069, and Asn1199 each carry an N-linked (GlcNAc...) asparagine glycan. Helical transmembrane passes span 1315–1335 and 1343–1363; these read MHVLLASLLCTLVACLGAAIL and LCALLFCAVIAGAQYSLVKSV. Asn1375 is a glycosylation site (N-linked (GlcNAc...) asparagine). 4 helical membrane passes run 1376–1396, 1423–1443, 1474–1494, and 1504–1524; these read KTVAYSRAIYFCLAGGMLLLL, VVALLLQALYILLLCFPIIFS, LLGSFLCVVRSVLAVMLLYGP, and GTQYILFSIFCAMLVPLGYHL. Asn1572 carries N-linked (GlcNAc...) asparagine glycosylation. Disordered stretches follow at residues 1577–1675, 1722–1744, and 1760–1813; these read QLTT…TGEP, DKISSSSATNPGDMSTLTAGAGT, and AEAE…LPDP. Basic and acidic residues-rich tracts occupy residues 1587-1598 and 1607-1620; these read RQTDVKTEHEQI and TVNEEHHEKDHGAD. A compositionally biased stretch (low complexity) spans 1639-1666; that stretch reads KTSSLGSSQQTLGKTISSSKRAITASSS. The segment covering 1725 to 1738 has biased composition (polar residues); it reads SSSSATNPGDMSTL. 5 tandem repeats follow at residues 1776–1777, 1778–1779, 1780–1781, 1782–1783, and 1784–1785. Residues 1776 to 1785 are 5 X 2 AA tandem repeats of G-T; that stretch reads GTGTGTGTGT. Residues Asn1791 and Asn1804 are each glycosylated (N-linked (GlcNAc...) asparagine). Residues 1799-1808 are compositionally biased toward low complexity; the sequence is GNTNSNGTGN. A run of 5 helical transmembrane segments spans residues 1830 to 1850, 1856 to 1876, 1914 to 1934, 1940 to 1960, and 1976 to 1996; these read LVVMTLLAVSVLGLHCSTVFT, LNVVLYSFIGVLGLLLHYIVP, LYIYLSVLERNVLFPLLAISS, QLIVAKFGLPWGTLIVAICAL, and IIIFTVLLFRIDFAMATETFI. A disordered region spans residues 2344 to 2463; sequence SMGGAPPAQA…HSFANISRQT (120 aa). Residues 2346-2370 are compositionally biased toward low complexity; that stretch reads GGAPPAQAPAAAGGASSAPATAGVA. N-linked (GlcNAc...) asparagine glycans are attached at residues Asn2380 and Asn2387. The segment covering 2389 to 2411 has biased composition (low complexity); it reads SAHGGQAGPSSGQSKSQSQQQLR. Over residues 2437–2447 the composition is skewed to gly residues; that stretch reads GTGGVTGGGGD. Over residues 2449–2463 the composition is skewed to polar residues; that stretch reads QLSSSHSFANISRQT. Residues Asn2458, Asn2619, and Asn2717 are each glycosylated (N-linked (GlcNAc...) asparagine). 2 disordered regions span residues 2908–2997 and 3198–3242; these read LNRE…SSGS and ESST…GDDG. Basic and acidic residues predominate over residues 2940-2956; the sequence is RRPEVGSSRGRDHERRA. The N-linked (GlcNAc...) asparagine glycan is linked to Asn3246. Positions 3295-3413 are disordered; the sequence is AEESKEKGTA…NGESEAGTTV (119 aa). Residues 3310–3323 are compositionally biased toward acidic residues; that stretch reads EGEEGVGEMEIEPE. Over residues 3364 to 3377 the composition is skewed to low complexity; that stretch reads TSSTSSAKSTSSPS. Positions 3380–3406 are enriched in acidic residues; it reads QEEEDAVDPEETPELASEESPSDENGE.

Belongs to the pecanex family.

Its subcellular location is the membrane. Its function is as follows. Involved in neurogenesis. In Drosophila melanogaster (Fruit fly), this protein is Protein pecanex (pcx).